The sequence spans 366 residues: Beta sliding clamp (366 aa).

Belongs to the beta sliding clamp family. In terms of assembly, forms a ring-shaped head-to-tail homodimer around DNA which binds and tethers DNA polymerases and other proteins to the DNA. The DNA replisome complex has a single clamp-loading complex (3 tau and 1 each of delta, delta', psi and chi subunits) which binds 3 Pol III cores (1 core on the leading strand and 2 on the lagging strand) each with a beta sliding clamp dimer. Additional proteins in the replisome are other copies of gamma, psi and chi, Ssb, DNA helicase and RNA primase.

It is found in the cytoplasm. Functionally, confers DNA tethering and processivity to DNA polymerases and other proteins. Acts as a clamp, forming a ring around DNA (a reaction catalyzed by the clamp-loading complex) which diffuses in an ATP-independent manner freely and bidirectionally along dsDNA. Initially characterized for its ability to contact the catalytic subunit of DNA polymerase III (Pol III), a complex, multichain enzyme responsible for most of the replicative synthesis in bacteria; Pol III exhibits 3'-5' exonuclease proofreading activity. The beta chain is required for initiation of replication as well as for processivity of DNA replication. In Buchnera aphidicola subsp. Rhopalosiphum padi, this protein is Beta sliding clamp (dnaN).